Consider the following 205-residue polypeptide: Proteasome subunit beta type-3 (205 aa).

The protein belongs to the peptidase T1B family. As to quaternary structure, the 26S proteasome consists of a 20S proteasome core and two 19S regulatory subunits. The 20S proteasome core is composed of 28 subunits that are arranged in four stacked rings, resulting in a barrel-shaped structure. The two end rings are each formed by seven alpha subunits, and the two central rings are each formed by seven beta subunits. The catalytic chamber with the active sites is on the inside of the barrel.

Its subcellular location is the cytoplasm. It is found in the nucleus. Functionally, non-catalytic component of the proteasome, a multicatalytic proteinase complex which is characterized by its ability to cleave peptides with Arg, Phe, Tyr, Leu, and Glu adjacent to the leaving group at neutral or slightly basic pH. The proteasome has an ATP-dependent proteolytic activity. This chain is Proteasome subunit beta type-3 (PSB3), found in Trypanosoma brucei brucei.